The chain runs to 480 residues: Proline--tRNA ligase (480 aa).

This sequence belongs to the class-II aminoacyl-tRNA synthetase family. ProS type 3 subfamily. As to quaternary structure, homodimer.

It localises to the cytoplasm. It catalyses the reaction tRNA(Pro) + L-proline + ATP = L-prolyl-tRNA(Pro) + AMP + diphosphate. Its function is as follows. Catalyzes the attachment of proline to tRNA(Pro) in a two-step reaction: proline is first activated by ATP to form Pro-AMP and then transferred to the acceptor end of tRNA(Pro). The protein is Proline--tRNA ligase of Mycobacterium leprae (strain Br4923).